A 105-amino-acid polypeptide reads, in one-letter code: UPF0473 protein SAK_2028 (105 aa).

The protein belongs to the UPF0473 family.

In Streptococcus agalactiae serotype Ia (strain ATCC 27591 / A909 / CDC SS700), this protein is UPF0473 protein SAK_2028.